A 537-amino-acid chain; its full sequence is Cytochrome bd ubiquinol oxidase subunit 1 (537 aa).

Topologically, residues 1–24 (MISESVVDLSRLQFAMTALYHFLF) are cytoplasmic. H21 is a binding site for heme b. The helical transmembrane segment at 25-44 (VPLTLGMTFLLAIMESVYVM) threads the bilayer. Residues 45 to 96 (TGKQVYKDMVKFWGKLFGINFALGVTTGITMEFQFGTNWAYYSHYVGDIFGA) lie on the Periplasmic side of the membrane. The helical transmembrane segment at 97–116 (PLAIEGLTAFFLESTFIGMF) threads the bilayer. Over 117 to 131 (FFGWDRLSKIQHLAV) the chain is Cytoplasmic. A helical transmembrane segment spans residues 132-151 (TWLVALGSNLSALWILVANG). Residues 152 to 189 (WMQHPVGAEFNFETMRMELVDFGALLLNPVAQVKFVHT) lie on the Periplasmic side of the membrane. H188 is a heme b binding site. The helical transmembrane segment at 190 to 209 (VASGYVTGAVFVLAISSYYL) threads the bilayer. Over 210–221 (LKKRDLGFARRS) the chain is Cytoplasmic. The chain crosses the membrane as a helical span at residues 222–241 (FAIASAFGMASILSVIVLGD). At 242–394 (ESGYEVGEVQ…VASMFWSFRA (153 aa)) the chain is on the periplasmic side. M395 provides a ligand contact to heme b. Residues 395 to 414 (MVGAGFAMLILFVCAFWASA) form a helical membrane-spanning segment. The Cytoplasmic portion of the chain corresponds to 415–472 (RKNEESKPWLLKFALYSLPLPWIATQTGWFVAEHGRQPWTIGGVLPTHLSASSLSTGD). Residues 473 to 492 (LWGSLIALIAFYTLLLVVEM) form a helical membrane-spanning segment. At 493–537 (YLMIRFARLGPSSLHTGRYHFEQLEQHAVKHASPSQADPQQPVNA) the chain is on the periplasmic side.

This sequence belongs to the cytochrome ubiquinol oxidase subunit 1 family. As to quaternary structure, heterodimer of subunits I and II. The cofactor is heme b. Requires heme d cis-diol as cofactor.

It is found in the cell inner membrane. It carries out the reaction 2 a ubiquinol + O2(in) + 4 H(+)(in) = 2 a ubiquinone + 2 H2O(in) + 4 H(+)(out). Its function is as follows. May be involved in maintaining the low intracellular oxygen concentration required for nitrogen fixation. The polypeptide is Cytochrome bd ubiquinol oxidase subunit 1 (cydA) (Azotobacter vinelandii).